We begin with the raw amino-acid sequence, 185 residues long: Elongation factor P (185 aa).

It belongs to the elongation factor P family.

It is found in the cytoplasm. It functions in the pathway protein biosynthesis; polypeptide chain elongation. Its function is as follows. Involved in peptide bond synthesis. Stimulates efficient translation and peptide-bond synthesis on native or reconstituted 70S ribosomes in vitro. Probably functions indirectly by altering the affinity of the ribosome for aminoacyl-tRNA, thus increasing their reactivity as acceptors for peptidyl transferase. This Staphylococcus epidermidis (strain ATCC 35984 / DSM 28319 / BCRC 17069 / CCUG 31568 / BM 3577 / RP62A) protein is Elongation factor P.